Consider the following 416-residue polypeptide: Cytochrome P450 monooxygenase PikC (416 aa).

Substrate-binding positions include Glu-94, 187–191, and 238–246; these read AQTAM and HILLVAGHE. Cys-354 lines the heme pocket.

Belongs to the cytochrome P450 family. Heme is required as a cofactor.

It catalyses the reaction narbomycin + 2 reduced [2Fe-2S]-[ferredoxin] + O2 + 2 H(+) = pikromycin + 2 oxidized [2Fe-2S]-[ferredoxin] + H2O. The catalysed reaction is narbomycin + 2 reduced [2Fe-2S]-[ferredoxin] + O2 + 2 H(+) = neopikromycin + 2 oxidized [2Fe-2S]-[ferredoxin] + H2O. It carries out the reaction narbomycin + 4 reduced [2Fe-2S]-[ferredoxin] + 2 O2 + 4 H(+) = novapikromycin + 4 oxidized [2Fe-2S]-[ferredoxin] + 2 H2O. The enzyme catalyses 10-deoxymethymycin + 2 reduced [2Fe-2S]-[ferredoxin] + O2 + 2 H(+) = methymycin + 2 oxidized [2Fe-2S]-[ferredoxin] + H2O. It catalyses the reaction 10-deoxymethymycin + 2 reduced [2Fe-2S]-[ferredoxin] + O2 + 2 H(+) = neomethymycin + 2 oxidized [2Fe-2S]-[ferredoxin] + H2O. The catalysed reaction is 10-deoxymethymycin + 4 reduced [2Fe-2S]-[ferredoxin] + 2 O2 + 4 H(+) = novamethymycin + 4 oxidized [2Fe-2S]-[ferredoxin] + 2 H2O. The protein operates within antibiotic biosynthesis. Catalyzes the hydroxylation of narbomycin to give rise to pikromycin, and of 10-deoxymethymycin (YC-17) to give rise to methymycin and neomethymycin during macrolide antibiotic biosynthesis. In addition, produces low amounts of neopicromycin, novapikromycin and novamethymycin. Requires the participation of a ferredoxin and a ferredoxin reductase for the transfer of electrons from NADPH to the monooxygenase. The protein is Cytochrome P450 monooxygenase PikC of Streptomyces venezuelae.